Consider the following 25-residue polypeptide: Caerin-1.2 (25 aa).

Leucine 25 carries the leucine amide modification.

Expressed by the skin parotoid and/or rostral glands.

The protein localises to the secreted. Its function is as follows. Antibacterial peptide, that adopts an alpha helical conformation which can disrupt bacterial membranes. Each caerin displays a different antimicrobial specificity. The protein is Caerin-1.2 of Ranoidea caerulea (Green tree frog).